We begin with the raw amino-acid sequence, 714 residues long: Stellatatriene synthase (714 aa).

The interval 1 to 325 (MEYKFSTVVD…RYNSSGSFSD (325 aa)) is stellata-2,6,19-trien synthase. Mg(2+) contacts are provided by aspartate 92 and aspartate 96. The DDXXD motif 1 signature appears at 92–96 (DDVTD). Positions 276-284 (YLKIVEEYK) match the NSE motif motif. The tract at residues 326-713 (HQLELMKNGV…LRLIMELLKT (388 aa)) is geranylgeranyl diphosphate synthase. A disordered region spans residues 332–356 (KNGVPKDPASGSTNGTSNGTSNGTS). Positions 341 to 356 (SGSTNGTSNGTSNGTS) are enriched in low complexity. Lysine 434, arginine 437, and histidine 466 together coordinate isopentenyl diphosphate. Mg(2+) is bound by residues aspartate 473 and aspartate 477. The short motif at 473 to 477 (DDVED) is the DDXXD motif 2 element. Arginine 482 contacts dimethylallyl diphosphate. Residue arginine 483 coordinates isopentenyl diphosphate. The dimethylallyl diphosphate site is built by lysine 560, threonine 561, glutamine 596, asparagine 603, lysine 613, and lysine 623.

In the N-terminal section; belongs to the terpene synthase family. The protein in the C-terminal section; belongs to the FPP/GGPP synthase family. As to quaternary structure, hexamer.

The catalysed reaction is 4 isopentenyl diphosphate + dimethylallyl diphosphate = (2E,6E,10E,14E)-geranylfarnesyl diphosphate + 4 diphosphate. The enzyme catalyses (2E,6E,10E,14E)-geranylfarnesyl diphosphate = stellata-2,6,19-triene + diphosphate. It participates in secondary metabolite biosynthesis; terpenoid biosynthesis. In terms of biological role, multifunctional diterpene synthase; part of the gene cluster that mediates the biosynthesis of the sesterterpene stellatic acid. The first step in the pathway is performed by the stellatatriene synthase that possesses both prenyl transferase and terpene cyclase activity, converting isopentenyl diphosphate and dimethylallyl diphosphate into geranylgeranyl diphosphate (GGDP) and then converting GGDP into stellata-2,6,19-triene. The cytochrome P450 monooxygenase Stl-P450 then catalyzes three successive oxidation reactions on the C-20 methyl group to generate the carboxylic acid of stellatic acid. This chain is Stellatatriene synthase, found in Emericella variicolor (Aspergillus stellatus).